The following is a 492-amino-acid chain: Cytoplasmic dynein 1 light intermediate chain 2 (492 aa).

Glycine 61–threonine 68 is a binding site for ATP. 3 disordered regions span residues glutamate 188 to glutamate 207, leucine 370 to alanine 423, and leucine 437 to alanine 492. Serine 194, serine 383, and serine 391 each carry phosphoserine. Over residues leucine 370–serine 383 the composition is skewed to polar residues. An Omega-N-methylarginine modification is found at arginine 397. The span at leucine 437–glutamine 469 shows a compositional bias: polar residues. Threonine 441 is subject to Phosphothreonine. Phosphoserine is present on residues serine 443 and serine 446. Residues glutamate 471–aspartate 480 are compositionally biased toward basic and acidic residues. Residues methionine 482–alanine 492 are compositionally biased toward polar residues.

Belongs to the dynein light intermediate chain family. Homodimer. The cytoplasmic dynein 1 complex consists of two catalytic heavy chains (HCs) and a number of non-catalytic subunits presented by intermediate chains (ICs), light intermediate chains (LICs) and light chains (LCs); the composition seems to vary in respect to the IC, LIC and LC composition. The heavy chain homodimer serves as a scaffold for the probable homodimeric assembly of the respective non-catalytic subunits. The ICs and LICs bind directly to the HC dimer and the LCs assemble on the IC dimer. Interacts with DYNC1H1; DYNC1LI1 and DYNC1LI2 bind mutually exclusive to DYNC1H.

Its subcellular location is the cytoplasm. It localises to the cytoskeleton. Acts as one of several non-catalytic accessory components of the cytoplasmic dynein 1 complex that are thought to be involved in linking dynein to cargos and to adapter proteins that regulate dynein function. Cytoplasmic dynein 1 acts as a motor for the intracellular retrograde motility of vesicles and organelles along microtubules. May play a role in binding dynein to membranous organelles or chromosomes. The protein is Cytoplasmic dynein 1 light intermediate chain 2 (Dync1li2) of Mus musculus (Mouse).